A 254-amino-acid polypeptide reads, in one-letter code: Triosephosphate isomerase (254 aa).

12 to 14 contacts substrate; the sequence is NWK. The active-site Electrophile is the H99. E169 functions as the Proton acceptor in the catalytic mechanism. Substrate-binding positions include G175, S214, and 235–236; that span reads GG.

It belongs to the triosephosphate isomerase family. In terms of assembly, homodimer.

The protein localises to the cytoplasm. The catalysed reaction is D-glyceraldehyde 3-phosphate = dihydroxyacetone phosphate. Its pathway is carbohydrate biosynthesis; gluconeogenesis. The protein operates within carbohydrate degradation; glycolysis; D-glyceraldehyde 3-phosphate from glycerone phosphate: step 1/1. Involved in the gluconeogenesis. Catalyzes stereospecifically the conversion of dihydroxyacetone phosphate (DHAP) to D-glyceraldehyde-3-phosphate (G3P). This Xanthobacter autotrophicus (strain ATCC BAA-1158 / Py2) protein is Triosephosphate isomerase.